The following is a 160-amino-acid chain: NADH-quinone oxidoreductase subunit B (160 aa).

Residues cysteine 37, cysteine 38, cysteine 102, and cysteine 132 each contribute to the [4Fe-4S] cluster site.

The protein belongs to the complex I 20 kDa subunit family. In terms of assembly, NDH-1 is composed of 14 different subunits. Subunits NuoB, C, D, E, F, and G constitute the peripheral sector of the complex. The cofactor is [4Fe-4S] cluster.

The protein localises to the cell membrane. The enzyme catalyses a quinone + NADH + 5 H(+)(in) = a quinol + NAD(+) + 4 H(+)(out). Functionally, NDH-1 shuttles electrons from NADH, via FMN and iron-sulfur (Fe-S) centers, to quinones in the respiratory chain. Couples the redox reaction to proton translocation (for every two electrons transferred, four hydrogen ions are translocated across the cytoplasmic membrane), and thus conserves the redox energy in a proton gradient. This chain is NADH-quinone oxidoreductase subunit B, found in Polynucleobacter asymbioticus (strain DSM 18221 / CIP 109841 / QLW-P1DMWA-1) (Polynucleobacter necessarius subsp. asymbioticus).